Here is an 89-residue protein sequence, read N- to C-terminus: Small ribosomal subunit protein uS17 (89 aa).

The protein belongs to the universal ribosomal protein uS17 family. In terms of assembly, part of the 30S ribosomal subunit.

Its function is as follows. One of the primary rRNA binding proteins, it binds specifically to the 5'-end of 16S ribosomal RNA. The sequence is that of Small ribosomal subunit protein uS17 from Albidiferax ferrireducens (strain ATCC BAA-621 / DSM 15236 / T118) (Rhodoferax ferrireducens).